Consider the following 139-residue polypeptide: Heat shock protein homolog C338.06c (139 aa).

The 113-residue stretch at 27–139 folds into the sHSP domain; it reads AWLSCWGPAL…EFTTRIVEIQ (113 aa).

Belongs to the small heat shock protein (HSP20) family.

It is found in the mitochondrion. The chain is Heat shock protein homolog C338.06c from Schizosaccharomyces pombe (strain 972 / ATCC 24843) (Fission yeast).